The chain runs to 199 residues: Putative inactive ribonuclease 11 (199 aa).

Residues 1 to 16 (METFPLLLLSLGLVLA) form the signal peptide. A glycan (N-linked (GlcNAc...) asparagine) is linked at Asn-61. His-82 acts as the Proton acceptor in catalysis. 2 N-linked (GlcNAc...) asparagine glycosylation sites follow: Asn-89 and Asn-111. 2 disulfide bridges follow: Cys-98/Cys-158 and Cys-114/Cys-169. 115–119 (KWSNN) provides a ligand contact to substrate.

This sequence belongs to the pancreatic ribonuclease family.

It localises to the secreted. The protein is Putative inactive ribonuclease 11 (RNASE11) of Homo sapiens (Human).